An 881-amino-acid chain; its full sequence is DNA mismatch repair protein MutS (881 aa).

627-634 contacts ATP; the sequence is GPNMGGKS.

This sequence belongs to the DNA mismatch repair MutS family.

In terms of biological role, this protein is involved in the repair of mismatches in DNA. It is possible that it carries out the mismatch recognition step. This protein has a weak ATPase activity. This chain is DNA mismatch repair protein MutS, found in Acinetobacter baumannii (strain AB307-0294).